The primary structure comprises 274 residues: Ribose-5-phosphate isomerase (274 aa).

This sequence belongs to the ribose 5-phosphate isomerase family.

The protein resides in the cytoplasm. The catalysed reaction is aldehydo-D-ribose 5-phosphate = D-ribulose 5-phosphate. The protein operates within carbohydrate degradation; pentose phosphate pathway; D-ribose 5-phosphate from D-ribulose 5-phosphate (non-oxidative stage): step 1/1. In Kluyveromyces lactis (strain ATCC 8585 / CBS 2359 / DSM 70799 / NBRC 1267 / NRRL Y-1140 / WM37) (Yeast), this protein is Ribose-5-phosphate isomerase (RKI1).